Consider the following 343-residue polypeptide: 3-dehydroquinate synthase (343 aa).

Residues 61-66 (SGEKYK), 95-99 (GVISD), 119-120 (TT), Lys132, Lys141, and 159-162 (FLKT) contribute to the NAD(+) site. 3 residues coordinate Zn(2+): Glu174, His231, and His248.

It belongs to the sugar phosphate cyclases superfamily. Dehydroquinate synthase family. Requires Co(2+) as cofactor. Zn(2+) serves as cofactor. The cofactor is NAD(+).

It is found in the cytoplasm. It catalyses the reaction 7-phospho-2-dehydro-3-deoxy-D-arabino-heptonate = 3-dehydroquinate + phosphate. It functions in the pathway metabolic intermediate biosynthesis; chorismate biosynthesis; chorismate from D-erythrose 4-phosphate and phosphoenolpyruvate: step 2/7. Functionally, catalyzes the conversion of 3-deoxy-D-arabino-heptulosonate 7-phosphate (DAHP) to dehydroquinate (DHQ). This Helicobacter pylori (strain G27) protein is 3-dehydroquinate synthase.